Reading from the N-terminus, the 415-residue chain is uncharacterized protein (415 aa).

Residues 1–55 form the TRAM domain; sequence MSTGTVTIDRLGAQGDGVARTEAGPVFAPFTLPGETVSLAVNKANGTLISLKEAS. [4Fe-4S] cluster-binding residues include Cys63, Cys75, Cys78, and Cys152. S-adenosyl-L-methionine is bound by residues Gln252, Phe279, Glu299, and Asp347. Cys373 functions as the Nucleophile in the catalytic mechanism.

It belongs to the class I-like SAM-binding methyltransferase superfamily. RNA M5U methyltransferase family.

This is an uncharacterized protein from Rhizobium meliloti (strain 1021) (Ensifer meliloti).